A 61-amino-acid chain; its full sequence is UPF0434 protein PFLU_3771 (61 aa).

The protein belongs to the UPF0434 family.

The protein is UPF0434 protein PFLU_3771 of Pseudomonas fluorescens (strain SBW25).